The primary structure comprises 167 residues: Large ribosomal subunit protein uL10 (167 aa).

It belongs to the universal ribosomal protein uL10 family. Part of the ribosomal stalk of the 50S ribosomal subunit. The N-terminus interacts with L11 and the large rRNA to form the base of the stalk. The C-terminus forms an elongated spine to which L12 dimers bind in a sequential fashion forming a multimeric L10(L12)X complex.

Its function is as follows. Forms part of the ribosomal stalk, playing a central role in the interaction of the ribosome with GTP-bound translation factors. The polypeptide is Large ribosomal subunit protein uL10 (Tolumonas auensis (strain DSM 9187 / NBRC 110442 / TA 4)).